A 562-amino-acid polypeptide reads, in one-letter code: Dihydroxy-acid dehydratase (562 aa).

Cys-53 is a [2Fe-2S] cluster binding site. Mg(2+) is bound at residue Asp-85. Cys-126 is a [2Fe-2S] cluster binding site. Asp-127 and Lys-128 together coordinate Mg(2+). Position 128 is an N6-carboxylysine (Lys-128). Cys-198 lines the [2Fe-2S] cluster pocket. Glu-449 lines the Mg(2+) pocket. Ser-475 serves as the catalytic Proton acceptor.

This sequence belongs to the IlvD/Edd family. In terms of assembly, homodimer. The cofactor is [2Fe-2S] cluster. It depends on Mg(2+) as a cofactor.

The catalysed reaction is (2R)-2,3-dihydroxy-3-methylbutanoate = 3-methyl-2-oxobutanoate + H2O. It carries out the reaction (2R,3R)-2,3-dihydroxy-3-methylpentanoate = (S)-3-methyl-2-oxopentanoate + H2O. It participates in amino-acid biosynthesis; L-isoleucine biosynthesis; L-isoleucine from 2-oxobutanoate: step 3/4. Its pathway is amino-acid biosynthesis; L-valine biosynthesis; L-valine from pyruvate: step 3/4. In terms of biological role, functions in the biosynthesis of branched-chain amino acids. Catalyzes the dehydration of (2R,3R)-2,3-dihydroxy-3-methylpentanoate (2,3-dihydroxy-3-methylvalerate) into 2-oxo-3-methylpentanoate (2-oxo-3-methylvalerate) and of (2R)-2,3-dihydroxy-3-methylbutanoate (2,3-dihydroxyisovalerate) into 2-oxo-3-methylbutanoate (2-oxoisovalerate), the penultimate precursor to L-isoleucine and L-valine, respectively. This Methylococcus capsulatus (strain ATCC 33009 / NCIMB 11132 / Bath) protein is Dihydroxy-acid dehydratase.